The primary structure comprises 280 residues: ATP synthase gamma chain (280 aa).

This sequence belongs to the ATPase gamma chain family. F-type ATPases have 2 components, CF(1) - the catalytic core - and CF(0) - the membrane proton channel. CF(1) has five subunits: alpha(3), beta(3), gamma(1), delta(1), epsilon(1). CF(0) has three main subunits: a, b and c.

The protein localises to the cell membrane. Functionally, produces ATP from ADP in the presence of a proton gradient across the membrane. The gamma chain is believed to be important in regulating ATPase activity and the flow of protons through the CF(0) complex. This is ATP synthase gamma chain from Mycoplasma mycoides subsp. mycoides SC (strain CCUG 32753 / NCTC 10114 / PG1).